The sequence spans 188 residues: MSTAESREGAQPGLHAYLRRGGVIAYPTESCYGLGCDPRNAAALRRLIRLKGRDAGKGMLLIADRYRRLQPFVGALSPTGRARMRRSWPGPVTWVVPASRRCPPELTGGRTTVAVRVTAHRPAAALCRSLGTALVSTSANKSGHTPAKTAAQCRRMFGARVRVVDGRIGTRRRPSTLIDLATGKILRA.

The region spanning 8–188 (EGAQPGLHAY…DLATGKILRA (181 aa)) is the YrdC-like domain.

It belongs to the SUA5 family. TsaC subfamily.

The protein localises to the cytoplasm. The catalysed reaction is L-threonine + hydrogencarbonate + ATP = L-threonylcarbamoyladenylate + diphosphate + H2O. Its function is as follows. Required for the formation of a threonylcarbamoyl group on adenosine at position 37 (t(6)A37) in tRNAs that read codons beginning with adenine. Catalyzes the conversion of L-threonine, HCO(3)(-)/CO(2) and ATP to give threonylcarbamoyl-AMP (TC-AMP) as the acyladenylate intermediate, with the release of diphosphate. In Thiobacillus denitrificans (strain ATCC 25259 / T1), this protein is Threonylcarbamoyl-AMP synthase.